Consider the following 130-residue polypeptide: uncharacterized protein (130 aa).

A helical membrane pass occupies residues 21–43 (VAVCTVAAEVLAIFTLVCTRVFI).

The protein localises to the membrane. This is an uncharacterized protein from Saccharomyces cerevisiae (strain ATCC 204508 / S288c) (Baker's yeast).